The chain runs to 556 residues: MRIKKYTKVRLLVNCCLLLFFLIDCGADRQSLYKDLLASLIYISDNKNIGSTNSDLTGSGSVSSSPADAAPENSILANSIPENMGIKILTHNVFLLPKTLPGWGNWGQNERAQRIVSSNYIQNQDVIVFDEAFDTDARKILLDGVRSEYPYQTDVIGRTKKGWDATLGLYRTDAFTNGGVVIVSKWPIEEKIQHVFKEKGCGADVFSNKGFAYVRIDKNGRKFHIIGTHVQAQDSGCANLGVVSRVNQFNEIRDFIDSKKIPKNEMVLIAGDLNVIKGSREYHQMLCILNVNNPKYVGVPFTWDTKTNEIAAFYYKKVEPAYLDYIFVSKSHFQPPIWQNLAYDPISAKTWTAKGYTSDEFSDHYPVYGFIYADSSTPTKSGRKRKYDRVSFVSVATGKKIQANSEKSNAWLKVNATTETDLTKFNLVQTNDPDSNPSCMKSGHVRIESSHSLNYFWNWWLGGGKGNYAYYPKFNDGSNRIQIINLDGGCLQDGSRVAFKDYDTISRRQYFLTVWEGGNWDKYLYLWRSHIGLREIFYLKLDSSPEMNWSKKLIYR.

The signal sequence occupies residues 1 to 27; it reads MRIKKYTKVRLLVNCCLLLFFLIDCGA.

It localises to the secreted. It carries out the reaction a sphingomyelin + H2O = phosphocholine + an N-acylsphing-4-enine + H(+). In Leptospira interrogans, this protein is Sphingomyelinase C (sph).